The following is an 84-amino-acid chain: Small ribosomal subunit protein bS18 (84 aa).

It belongs to the bacterial ribosomal protein bS18 family. Part of the 30S ribosomal subunit. Forms a tight heterodimer with protein bS6.

Functionally, binds as a heterodimer with protein bS6 to the central domain of the 16S rRNA, where it helps stabilize the platform of the 30S subunit. The sequence is that of Small ribosomal subunit protein bS18 from Dictyoglomus turgidum (strain DSM 6724 / Z-1310).